Here is a 487-residue protein sequence, read N- to C-terminus: 3-octaprenyl-4-hydroxybenzoate carboxy-lyase (487 aa).

N172 contacts Mn(2+). Prenylated FMN is bound by residues 175–177, 189–191, and 194–195; these read IYR, RWL, and RG. Mn(2+) is bound at residue E238. D287 acts as the Proton donor in catalysis.

Belongs to the UbiD family. In terms of assembly, homohexamer. The cofactor is prenylated FMN. Mn(2+) is required as a cofactor.

The protein resides in the cell membrane. It carries out the reaction a 4-hydroxy-3-(all-trans-polyprenyl)benzoate + H(+) = a 2-(all-trans-polyprenyl)phenol + CO2. It participates in cofactor biosynthesis; ubiquinone biosynthesis. Its function is as follows. Catalyzes the decarboxylation of 3-octaprenyl-4-hydroxy benzoate to 2-octaprenylphenol, an intermediate step in ubiquinone biosynthesis. The polypeptide is 3-octaprenyl-4-hydroxybenzoate carboxy-lyase (Nitrosococcus oceani (strain ATCC 19707 / BCRC 17464 / JCM 30415 / NCIMB 11848 / C-107)).